A 347-amino-acid chain; its full sequence is NADH-ubiquinone oxidoreductase chain 2 (347 aa).

Helical transmembrane passes span 3–23, 59–79, 89–109, 150–170, 178–198, 201–221, 237–257, 276–296, and 326–346; these read PMTFSLIMMTMVSGTFLVMMS, YFLTQATASMLLMMAAIINLL, LINPMASVTMTMALAMKLGLA, NLNILMIMALLSIAIGGWGGL, IMAYSSIAHMGWMMSVLMYNP, MLLNLYLYIPMTITTFSLLMI, LPLITMIILITMLSLGGLPPL, IILSTVMALLALLNLYFYTRI, and LPLMIIISTLILPVSPMTAIL.

The protein belongs to the complex I subunit 2 family. Core subunit of respiratory chain NADH dehydrogenase (Complex I) which is composed of 45 different subunits. Interacts with TMEM242.

The protein resides in the mitochondrion inner membrane. The catalysed reaction is a ubiquinone + NADH + 5 H(+)(in) = a ubiquinol + NAD(+) + 4 H(+)(out). Functionally, core subunit of the mitochondrial membrane respiratory chain NADH dehydrogenase (Complex I) which catalyzes electron transfer from NADH through the respiratory chain, using ubiquinone as an electron acceptor. Essential for the catalytic activity and assembly of complex I. The sequence is that of NADH-ubiquinone oxidoreductase chain 2 from Nyctophilus arnhemensis (Northern long-eared bat).